The following is a 410-amino-acid chain: Multifunctional CCA protein (410 aa).

ATP-binding residues include G8 and R11. CTP contacts are provided by G8 and R11. Positions 21 and 23 each coordinate Mg(2+). ATP-binding residues include R91, R137, and R140. Residues R91, R137, and R140 each coordinate CTP. The region spanning 228 to 329 (TGIHSLMTLR…VKLLEQVDAF (102 aa)) is the HD domain.

Belongs to the tRNA nucleotidyltransferase/poly(A) polymerase family. Bacterial CCA-adding enzyme type 1 subfamily. In terms of assembly, monomer. Can also form homodimers and oligomers. Mg(2+) is required as a cofactor. It depends on Ni(2+) as a cofactor.

It carries out the reaction a tRNA precursor + 2 CTP + ATP = a tRNA with a 3' CCA end + 3 diphosphate. It catalyses the reaction a tRNA with a 3' CCA end + 2 CTP + ATP = a tRNA with a 3' CCACCA end + 3 diphosphate. Its function is as follows. Catalyzes the addition and repair of the essential 3'-terminal CCA sequence in tRNAs without using a nucleic acid template. Adds these three nucleotides in the order of C, C, and A to the tRNA nucleotide-73, using CTP and ATP as substrates and producing inorganic pyrophosphate. tRNA 3'-terminal CCA addition is required both for tRNA processing and repair. Also involved in tRNA surveillance by mediating tandem CCA addition to generate a CCACCA at the 3' terminus of unstable tRNAs. While stable tRNAs receive only 3'-terminal CCA, unstable tRNAs are marked with CCACCA and rapidly degraded. This is Multifunctional CCA protein from Legionella pneumophila (strain Lens).